The following is a 903-amino-acid chain: DNA gyrase subunit A (903 aa).

Residues 36–499 (LPDARDGFKP…AIDDSDDEDL (464 aa)) enclose the Topo IIA-type catalytic domain. Y124 acts as the O-(5'-phospho-DNA)-tyrosine intermediate in catalysis. The short motif at 526–532 (QNRGGKG) is the GyrA-box element. Basic and acidic residues predominate over residues 881 to 895 (VDDDSVVKDDAEKQE). Residues 881-903 (VDDDSVVKDDAEKQEIGPTETEE) are disordered.

The protein belongs to the type II topoisomerase GyrA/ParC subunit family. In terms of assembly, heterotetramer, composed of two GyrA and two GyrB chains. In the heterotetramer, GyrA contains the active site tyrosine that forms a transient covalent intermediate with DNA, while GyrB binds cofactors and catalyzes ATP hydrolysis.

It localises to the cytoplasm. It carries out the reaction ATP-dependent breakage, passage and rejoining of double-stranded DNA.. A type II topoisomerase that negatively supercoils closed circular double-stranded (ds) DNA in an ATP-dependent manner to modulate DNA topology and maintain chromosomes in an underwound state. Negative supercoiling favors strand separation, and DNA replication, transcription, recombination and repair, all of which involve strand separation. Also able to catalyze the interconversion of other topological isomers of dsDNA rings, including catenanes and knotted rings. Type II topoisomerases break and join 2 DNA strands simultaneously in an ATP-dependent manner. This chain is DNA gyrase subunit A, found in Fibrobacter succinogenes (strain ATCC 19169 / S85).